A 675-amino-acid polypeptide reads, in one-letter code: DNA ligase (675 aa).

Residues 34–38, 83–84, and E116 contribute to the NAD(+) site; these read DAEYD and SL. K118 acts as the N6-AMP-lysine intermediate in catalysis. NAD(+) contacts are provided by R139, E176, K293, and K317. Positions 411, 414, 429, and 435 each coordinate Zn(2+). A BRCT domain is found at 594–675; sequence AGENPFKGKT…FLAIVNAYKR (82 aa).

This sequence belongs to the NAD-dependent DNA ligase family. LigA subfamily. Requires Mg(2+) as cofactor. The cofactor is Mn(2+).

The catalysed reaction is NAD(+) + (deoxyribonucleotide)n-3'-hydroxyl + 5'-phospho-(deoxyribonucleotide)m = (deoxyribonucleotide)n+m + AMP + beta-nicotinamide D-nucleotide.. In terms of biological role, DNA ligase that catalyzes the formation of phosphodiester linkages between 5'-phosphoryl and 3'-hydroxyl groups in double-stranded DNA using NAD as a coenzyme and as the energy source for the reaction. It is essential for DNA replication and repair of damaged DNA. This Mannheimia succiniciproducens (strain KCTC 0769BP / MBEL55E) protein is DNA ligase.